The following is a 76-amino-acid chain: uncharacterized protein (76 aa).

This is an uncharacterized protein from Magallana gigas (Pacific oyster).